Here is a 132-residue protein sequence, read N- to C-terminus: Small ribosomal subunit protein uS8 (132 aa).

Belongs to the universal ribosomal protein uS8 family. In terms of assembly, part of the 30S ribosomal subunit. Contacts proteins S5 and S12.

Its function is as follows. One of the primary rRNA binding proteins, it binds directly to 16S rRNA central domain where it helps coordinate assembly of the platform of the 30S subunit. The polypeptide is Small ribosomal subunit protein uS8 (Kineococcus radiotolerans (strain ATCC BAA-149 / DSM 14245 / SRS30216)).